The following is a 153-amino-acid chain: Large ribosomal subunit protein uL15 (153 aa).

The disordered stretch occupies residues 21 to 41 (RGIGSGKGKTGGRGIKGQKSR). The segment covering 23-35 (IGSGKGKTGGRGI) has biased composition (gly residues).

It belongs to the universal ribosomal protein uL15 family. As to quaternary structure, part of the 50S ribosomal subunit.

In terms of biological role, binds to the 23S rRNA. The chain is Large ribosomal subunit protein uL15 from Rickettsia rickettsii (strain Iowa).